A 175-amino-acid polypeptide reads, in one-letter code: MDAKEILELVEESYKSEDGDYKNKVYFISYFLSSLIFVLIHISIKYWNFNILFIVSLLLIIGSILIVRQQKLYKKTRCYFDKIFEKIVKYGMIAVVLSSVITLYTYPRISGVAIAGIFGFLLVIDGILFKSKKRKFLGLLMMFSSIPMFIFHEYQFLIFAFVQFLVALCFLICKE.

This is an uncharacterized protein from Methanocaldococcus jannaschii (strain ATCC 43067 / DSM 2661 / JAL-1 / JCM 10045 / NBRC 100440) (Methanococcus jannaschii).